Reading from the N-terminus, the 483-residue chain is Proline--tRNA ligase (483 aa).

The protein belongs to the class-II aminoacyl-tRNA synthetase family. ProS type 3 subfamily. Homodimer.

The protein resides in the cytoplasm. It carries out the reaction tRNA(Pro) + L-proline + ATP = L-prolyl-tRNA(Pro) + AMP + diphosphate. In terms of biological role, catalyzes the attachment of proline to tRNA(Pro) in a two-step reaction: proline is first activated by ATP to form Pro-AMP and then transferred to the acceptor end of tRNA(Pro). This chain is Proline--tRNA ligase, found in Mycoplasma pneumoniae (strain ATCC 29342 / M129 / Subtype 1) (Mycoplasmoides pneumoniae).